A 1321-amino-acid chain; its full sequence is Multidrug resistance protein pgp-1 (1321 aa).

At Met1–Leu77 the chain is on the cytoplasmic side. The 305-residue stretch at Leu77–Thr381 folds into the ABC transmembrane type-1 1 domain. A helical membrane pass occupies residues Phe78–Gln98. Residues Asn115 and Asn125 are each glycosylated (N-linked (GlcNAc...) asparagine). Residues Ala144–Ala164 traverse the membrane as a helical segment. N-linked (GlcNAc...) asparagine glycosylation occurs at Asn190. A run of 4 helical transmembrane segments spans residues Lys213 to Thr233, Leu240 to Met260, Ile321 to Gly341, and Leu350 to Gly370. Residues Leu371–Ser753 lie on the Cytoplasmic side of the membrane. Residues Ile416 to Ala652 enclose the ABC transporter 1 domain. Gly451–Ser458 is an ATP binding site. The next 2 membrane-spanning stretches (helical) occupy residues Leu754–Phe774 and Leu798–Met818. Residues Leu754–Lys1043 form the ABC transmembrane type-1 2 domain. An N-linked (GlcNAc...) asparagine glycan is attached at Asn850. 4 helical membrane passes run Phe874–Tyr894, Gly895–Leu915, Ile978–Tyr998, and Val1017–Tyr1037. Residues Phe1038–Lys1321 lie on the Cytoplasmic side of the membrane. The ABC transporter 2 domain maps to Val1077–Lys1315. Gly1112 to Ser1119 contacts ATP.

The protein belongs to the ABC transporter superfamily. ABCB family. Multidrug resistance exporter (TC 3.A.1.201) subfamily. As to expression, intestinal cells.

Its subcellular location is the membrane. The enzyme catalyses ATP + H2O + xenobioticSide 1 = ADP + phosphate + xenobioticSide 2.. Energy-dependent efflux pump responsible for decreased drug accumulation in multidrug-resistant cells. This Caenorhabditis elegans protein is Multidrug resistance protein pgp-1 (pgp-1).